A 191-amino-acid chain; its full sequence is Large ribosomal subunit protein uL3 (191 aa).

The interval 115–137 (GGPASHGSRFHRRHGSIGNREWP) is disordered.

The protein belongs to the universal ribosomal protein uL3 family. As to quaternary structure, part of the 50S ribosomal subunit. Forms a cluster with proteins L14 and L19.

One of the primary rRNA binding proteins, it binds directly near the 3'-end of the 23S rRNA, where it nucleates assembly of the 50S subunit. In Campylobacter jejuni subsp. jejuni serotype O:2 (strain ATCC 700819 / NCTC 11168), this protein is Large ribosomal subunit protein uL3 (rplC).